Consider the following 332-residue polypeptide: Ketol-acid reductoisomerase (NADP(+)) (332 aa).

The KARI N-terminal Rossmann domain occupies 5–185 (VKVYYDDEVS…GCTRAGVIET (181 aa)). Residues 28–31 (YGNQ), Arg51, Ser56, and 86–89 (DLVQ) contribute to the NADP(+) site. His111 is a catalytic residue. Gly137 lines the NADP(+) pocket. The KARI C-terminal knotted domain maps to 186-331 (TFKDETESDL…RFIRKMSGLE (146 aa)). 4 residues coordinate Mg(2+): Asp194, Glu198, Glu230, and Glu234. Substrate is bound at residue Ser255.

It belongs to the ketol-acid reductoisomerase family. Requires Mg(2+) as cofactor.

It carries out the reaction (2R)-2,3-dihydroxy-3-methylbutanoate + NADP(+) = (2S)-2-acetolactate + NADPH + H(+). The enzyme catalyses (2R,3R)-2,3-dihydroxy-3-methylpentanoate + NADP(+) = (S)-2-ethyl-2-hydroxy-3-oxobutanoate + NADPH + H(+). The protein operates within amino-acid biosynthesis; L-isoleucine biosynthesis; L-isoleucine from 2-oxobutanoate: step 2/4. It functions in the pathway amino-acid biosynthesis; L-valine biosynthesis; L-valine from pyruvate: step 2/4. Functionally, involved in the biosynthesis of branched-chain amino acids (BCAA). Catalyzes an alkyl-migration followed by a ketol-acid reduction of (S)-2-acetolactate (S2AL) to yield (R)-2,3-dihydroxy-isovalerate. In the isomerase reaction, S2AL is rearranged via a Mg-dependent methyl migration to produce 3-hydroxy-3-methyl-2-ketobutyrate (HMKB). In the reductase reaction, this 2-ketoacid undergoes a metal-dependent reduction by NADPH to yield (R)-2,3-dihydroxy-isovalerate. This chain is Ketol-acid reductoisomerase (NADP(+)), found in Pyrococcus abyssi (strain GE5 / Orsay).